Here is a 101-residue protein sequence, read N- to C-terminus: RNA-3 uncharacterized 11.6 kDa protein (101 aa).

The polypeptide is RNA-3 uncharacterized 11.6 kDa protein (Beet necrotic yellow vein mosaic virus (isolate Yugoslavia/G1) (BNYVV)).